The following is a 363-amino-acid chain: 3-dehydroquinate synthase (363 aa).

NAD(+)-binding positions include 71–76, 105–109, 129–130, K142, K151, and 169–172; these read DGEQYK, GVIGD, TT, and CLKT. Residues E184, H247, and H264 each contribute to the Zn(2+) site.

This sequence belongs to the sugar phosphate cyclases superfamily. Dehydroquinate synthase family. NAD(+) is required as a cofactor. Co(2+) serves as cofactor. The cofactor is Zn(2+).

It is found in the cytoplasm. It carries out the reaction 7-phospho-2-dehydro-3-deoxy-D-arabino-heptonate = 3-dehydroquinate + phosphate. The protein operates within metabolic intermediate biosynthesis; chorismate biosynthesis; chorismate from D-erythrose 4-phosphate and phosphoenolpyruvate: step 2/7. Its function is as follows. Catalyzes the conversion of 3-deoxy-D-arabino-heptulosonate 7-phosphate (DAHP) to dehydroquinate (DHQ). In Vibrio vulnificus (strain CMCP6), this protein is 3-dehydroquinate synthase.